Here is a 430-residue protein sequence, read N- to C-terminus: POU domain, class 2, transcription factor 3 (430 aa).

Disordered stretches follow at residues 1–40 (MVNL…NGLD), 60–81 (HRPC…SGDM), 129–180 (LLLP…EPTD), and 248–267 (DAES…YPTL). 2 stretches are compositionally biased toward polar residues: residues 23-32 (ARSTFGQVES) and 67-78 (QGPTMMPGNQMS). The span at 129–139 (LLLPQTGPGLT) shows a compositional bias: low complexity. Residues 176–250 (DEPTDLEELE…LLEKWLNDAE (75 aa)) enclose the POU-specific domain. Low complexity predominate over residues 251–267 (SSPSDPSASTPSSYPTL). The homeobox DNA-binding region spans 274-333 (KRKKRTSIETNIRLTLEKRFQDNPKPSSEEISMIAEQLSMEKEVVRVWFCNRRQKEKRIN). Composition is skewed to low complexity over residues 355 to 364 (SLGSLSVPPV) and 374 to 390 (SSCS…PGSG). A disordered region spans residues 355–413 (SLGSLSVPPVHSTMPGTVTSSCSPGNNSRPSSPGSGLHASSPTASQNNSKAAMNPSSAA). Positions 392–413 (HASSPTASQNNSKAAMNPSSAA) are enriched in polar residues.

Belongs to the POU transcription factor family. Class-2 subfamily. Interacts (via the POU domain) with POU2AF1 and POU2AF2 in a DNA-dependent manner; this interaction recruits POU2AF2 to chromatin and increases POU2F3 transactivation activity. As to expression, expressed in epidermis and hair follicles.

It is found in the nucleus. In terms of biological role, transcription factor that binds to the octamer motif (5'-ATTTGCAT-3') and regulates cell type-specific differentiation pathways. Involved in the regulation of keratinocytes differentiation. The POU2F3-POU2AF2/POU2AF3 complex drives the expression of tuft-cell-specific genes, a rare chemosensory cells that coordinate immune and neural functions within mucosal epithelial tissues. Functionally, inhibits transactivation by POU2F1. The sequence is that of POU domain, class 2, transcription factor 3 (Pou2f3) from Rattus norvegicus (Rat).